Consider the following 375-residue polypeptide: Serpin B5 (375 aa).

Residues asparagine 99, asparagine 133, asparagine 188, asparagine 298, and asparagine 361 are each glycosylated (N-linked (GlcNAc...) asparagine).

This sequence belongs to the serpin family. Ov-serpin subfamily. As to quaternary structure, interacts with IRF6.

It localises to the secreted. Its subcellular location is the extracellular space. Functionally, tumor suppressor. It blocks the growth, invasion, and metastatic properties of mammary tumors. As it does not undergo the S (stressed) to R (relaxed) conformational transition characteristic of active serpins, it exhibits no serine protease inhibitory activity. The polypeptide is Serpin B5 (Serpinb5) (Rattus norvegicus (Rat)).